The sequence spans 448 residues: ATP-dependent protease ATPase subunit HslU (448 aa).

Residues I18, 60–65, D261, E326, and R398 contribute to the ATP site; that span reads GVGKTE.

Belongs to the ClpX chaperone family. HslU subfamily. As to quaternary structure, a double ring-shaped homohexamer of HslV is capped on each side by a ring-shaped HslU homohexamer. The assembly of the HslU/HslV complex is dependent on binding of ATP.

Its subcellular location is the cytoplasm. Functionally, ATPase subunit of a proteasome-like degradation complex; this subunit has chaperone activity. The binding of ATP and its subsequent hydrolysis by HslU are essential for unfolding of protein substrates subsequently hydrolyzed by HslV. HslU recognizes the N-terminal part of its protein substrates and unfolds these before they are guided to HslV for hydrolysis. This chain is ATP-dependent protease ATPase subunit HslU, found in Paraburkholderia phytofirmans (strain DSM 17436 / LMG 22146 / PsJN) (Burkholderia phytofirmans).